Consider the following 365-residue polypeptide: Histidinol-phosphate aminotransferase (365 aa).

The interval 1–23 (MSRPVPNPGILDIAPYTPGKSPV) is disordered. At Lys-221 the chain carries N6-(pyridoxal phosphate)lysine.

It belongs to the class-II pyridoxal-phosphate-dependent aminotransferase family. Histidinol-phosphate aminotransferase subfamily. In terms of assembly, homodimer. The cofactor is pyridoxal 5'-phosphate.

It carries out the reaction L-histidinol phosphate + 2-oxoglutarate = 3-(imidazol-4-yl)-2-oxopropyl phosphate + L-glutamate. Its pathway is amino-acid biosynthesis; L-histidine biosynthesis; L-histidine from 5-phospho-alpha-D-ribose 1-diphosphate: step 7/9. The protein is Histidinol-phosphate aminotransferase of Rhodopseudomonas palustris (strain BisB18).